Consider the following 502-residue polypeptide: Maturase K (502 aa).

The protein belongs to the intron maturase 2 family. MatK subfamily.

It localises to the plastid. It is found in the chloroplast. In terms of biological role, usually encoded in the trnK tRNA gene intron. Probably assists in splicing its own and other chloroplast group II introns. In Spiraea cantoniensis (Reeve's meadowsweet), this protein is Maturase K.